Reading from the N-terminus, the 602-residue chain is Potassium-transporting ATPase potassium-binding subunit (602 aa).

The next 4 membrane-spanning stretches (helical) occupy residues 5–25, 65–85, 136–156, and 179–199; these read AMLQ…PLGA, GYAV…YALQ, GLTV…IALI, and LYVL…QGAI. Residues 221–248 form a disordered region; sequence QDAKGNPVLGKDGKPVMEDKTSQTQTLP. Residues 231–241 are compositionally biased toward basic and acidic residues; that stretch reads KDGKPVMEDKT. Helical transmembrane passes span 283–303, 312–332, 419–439, 458–478, 523–543, and 566–586; these read LANF…CFLF, QGWA…VVET, GLYG…LMVG, AITI…AVSL, IMTG…ILAI, and LFVT…YVPA.

Belongs to the KdpA family. As to quaternary structure, the system is composed of three essential subunits: KdpA, KdpB and KdpC.

The protein resides in the cell inner membrane. Its function is as follows. Part of the high-affinity ATP-driven potassium transport (or Kdp) system, which catalyzes the hydrolysis of ATP coupled with the electrogenic transport of potassium into the cytoplasm. This subunit binds the periplasmic potassium ions and delivers the ions to the membrane domain of KdpB through an intramembrane tunnel. The protein is Potassium-transporting ATPase potassium-binding subunit of Chromobacterium violaceum (strain ATCC 12472 / DSM 30191 / JCM 1249 / CCUG 213 / NBRC 12614 / NCIMB 9131 / NCTC 9757 / MK).